A 236-amino-acid chain; its full sequence is Protein INCA1 (236 aa).

At serine 23 the chain carries Phosphoserine. Residues 75-99 (GLYPPEQLPPPEMLWRRKKRRPCLE) are interaction with CCNA1 and CCNA1/CDK2 complex; essential for CDK2 inhibitory activity. The short motif at 90–95 (RRKKRR) is the Nuclear localization signal element. Phosphothreonine is present on threonine 182. A phosphoserine mark is found at serine 191 and serine 194.

This sequence belongs to the INCA family. Interacts with CCNA1. Interacts with CCNA2, CCNB1 and CCNE1. Found in a complex with CCNA1 and CDK2. Interacts with ZNF16; the interaction inhibits INCA1 activity and induces the cell cycle process. Interacts with SPACA9. Interacts with the CCNA1/CDK2 complex. Interacts with ING5, DAZAP2, RNF26, USP15, SPOUT1, DPH7, TRIM26 and RAB5C. In terms of processing, phosphorylated when part of a complex with CCNA1 and CDK2. Strongly phosphorylated by CDK2 on its C-terminal region spanning amino acid 149-221. Less intensively phosphorylated by CDK2 on its first 75 amino acid residues. Detected in testis, and at lower levels in ovary. Detected at very low levels in testis tumors. Down-regulated in bone marrow cells in acute myeloid and lymphoid leukemia patients as compared with normal bone marrow cells.

The protein resides in the nucleus. Its subcellular location is the cytoplasm. Its function is as follows. Binds to CDK2-bound cyclins and inhibits the kinase activity of CDK2; binding to cyclins is critical for its function as CDK inhibitor. Inhibits cell growth and cell proliferation and may play a role in cell cycle control. Required for ING5-mediated regulation of S-phase progression, enhancement of Fas-induced apoptosis and inhibition of cell growth. This Homo sapiens (Human) protein is Protein INCA1 (INCA1).